A 427-amino-acid polypeptide reads, in one-letter code: Trigger factor (427 aa).

In terms of domain architecture, PPIase FKBP-type spans 163 to 248; sequence GDIAVIDFKG…IKSIKVKELP (86 aa).

It belongs to the FKBP-type PPIase family. Tig subfamily.

It is found in the cytoplasm. The catalysed reaction is [protein]-peptidylproline (omega=180) = [protein]-peptidylproline (omega=0). Involved in protein export. Acts as a chaperone by maintaining the newly synthesized protein in an open conformation. Functions as a peptidyl-prolyl cis-trans isomerase. The protein is Trigger factor of Clostridium beijerinckii (strain ATCC 51743 / NCIMB 8052) (Clostridium acetobutylicum).